The chain runs to 496 residues: Angiopoietin-2 (496 aa).

A signal peptide spans 1–18; it reads MWQIVFFTLSCDLVLAAA. Residues Asn89, Asn119, Asn133, Asn151, Asn240, and Asn304 are each glycosylated (N-linked (GlcNAc...) asparagine). Residues 166 to 248 adopt a coiled-coil conformation; the sequence is STNKLEKQIL…VNNSVLQKQQ (83 aa). Residues 275-495 form the Fibrinogen C-terminal domain; sequence KEEQISFRDC…ATTMMIRPAD (221 aa). A disulfide bond links Cys284 and Cys313. Positions 429, 431, 433, and 435 each coordinate Ca(2+). 2 disulfide bridges follow: Cys433-Cys435 and Cys437-Cys450.

In terms of assembly, interacts with TEK/TIE2, competing for the same binding site as ANGPT1. Interacts with ITGA5. Interacts with SVEP1/polydom. Interacts with THBD; this interaction significantly inhibits the generation of activated PC and TAFIa/CPB2 by the thrombin/thrombomodulin complex.

The protein localises to the secreted. Binds to TEK/TIE2, competing for the ANGPT1 binding site, and modulating ANGPT1 signaling. Can induce tyrosine phosphorylation of TEK/TIE2 in the absence of ANGPT1. In the absence of angiogenic inducers, such as VEGF, ANGPT2-mediated loosening of cell-matrix contacts may induce endothelial cell apoptosis with consequent vascular regression. In concert with VEGF, it may facilitate endothelial cell migration and proliferation, thus serving as a permissive angiogenic signal. Involved in the regulation of lymphangiogenesis. The chain is Angiopoietin-2 (ANGPT2) from Homo sapiens (Human).